The primary structure comprises 96 residues: Signal recognition particle 19 kDa protein (96 aa).

This sequence belongs to the SRP19 family. In terms of assembly, part of the signal recognition particle protein translocation system, which is composed of SRP and FtsY. Archaeal SRP consists of a 7S RNA molecule of 300 nucleotides and two protein subunits: SRP54 and SRP19.

Its subcellular location is the cytoplasm. Its function is as follows. Involved in targeting and insertion of nascent membrane proteins into the cytoplasmic membrane. Binds directly to 7S RNA and mediates binding of the 54 kDa subunit of the SRP. This is Signal recognition particle 19 kDa protein from Pyrobaculum arsenaticum (strain DSM 13514 / JCM 11321 / PZ6).